Here is a 290-residue protein sequence, read N- to C-terminus: 4-hydroxybenzoate octaprenyltransferase (290 aa).

8 consecutive transmembrane segments (helical) span residues isoleucine 24–isoleucine 44, valine 48–asparagine 68, leucine 98–isoleucine 118, phenylalanine 142–isoleucine 162, tryptophan 171–isoleucine 191, phenylalanine 214–glutamate 234, valine 239–isoleucine 259, and alanine 270–histidine 290.

This sequence belongs to the UbiA prenyltransferase family. Requires Mg(2+) as cofactor.

The protein localises to the cell inner membrane. The enzyme catalyses all-trans-octaprenyl diphosphate + 4-hydroxybenzoate = 4-hydroxy-3-(all-trans-octaprenyl)benzoate + diphosphate. Its pathway is cofactor biosynthesis; ubiquinone biosynthesis. Catalyzes the prenylation of para-hydroxybenzoate (PHB) with an all-trans polyprenyl group. Mediates the second step in the final reaction sequence of ubiquinone-8 (UQ-8) biosynthesis, which is the condensation of the polyisoprenoid side chain with PHB, generating the first membrane-bound Q intermediate 3-octaprenyl-4-hydroxybenzoate. This Blochmanniella pennsylvanica (strain BPEN) protein is 4-hydroxybenzoate octaprenyltransferase.